A 406-amino-acid chain; its full sequence is Tyrosine--tRNA ligase (406 aa).

An L-tyrosine-binding site is contributed by Tyr35. The 'HIGH' region motif lies at Ala40–His49. Residues Tyr166 and Gln170 each contribute to the L-tyrosine site. A 'KMSKS' region motif is present at residues Lys226–Ser230. Lys229 serves as a coordination point for ATP. Residues Ile341–Ile405 form the S4 RNA-binding domain.

It belongs to the class-I aminoacyl-tRNA synthetase family. TyrS type 1 subfamily. In terms of assembly, homodimer.

It localises to the cytoplasm. It carries out the reaction tRNA(Tyr) + L-tyrosine + ATP = L-tyrosyl-tRNA(Tyr) + AMP + diphosphate + H(+). Catalyzes the attachment of tyrosine to tRNA(Tyr) in a two-step reaction: tyrosine is first activated by ATP to form Tyr-AMP and then transferred to the acceptor end of tRNA(Tyr). In Borrelia turicatae (strain 91E135), this protein is Tyrosine--tRNA ligase.